Consider the following 115-residue polypeptide: Large ribosomal subunit protein bL19 (115 aa).

Belongs to the bacterial ribosomal protein bL19 family.

This protein is located at the 30S-50S ribosomal subunit interface and may play a role in the structure and function of the aminoacyl-tRNA binding site. This is Large ribosomal subunit protein bL19 from Thermosipho melanesiensis (strain DSM 12029 / CIP 104789 / BI429).